A 725-amino-acid chain; its full sequence is Exocyst complex component 8 (725 aa).

Position 19 is a phosphoserine (serine 19). The segment at 137–159 is disordered; the sequence is AGFFSTPGGASRDGSGPGEEGKQ. Position 142 is a phosphothreonine (threonine 142). One can recognise a PH domain in the interval 182–282; the sequence is YLVYNGDLVE…WLEVLEDTKR (101 aa). Residues 285–328 form a disordered region; that stretch reads SEKRRREQEEAAAPRGPPQVTSKATNPFEDDEEEEPAVPEVEEE. Residues 312–328 are compositionally biased toward acidic residues; the sequence is FEDDEEEEPAVPEVEEE.

This sequence belongs to the EXO84 family. The exocyst complex is composed of EXOC1, EXOC2, EXOC3, EXOC4, EXOC5, EXOC6, EXOC7 and EXOC8. Interacts (via PH domain) with GTP-bound RALA and RALB. Interacts with SH3BP1; required for the localization of both SH3BP1 and the exocyst to the leading edge of migrating cells.

The protein localises to the cytoplasm. It is found in the perinuclear region. Its subcellular location is the cell projection. The protein resides in the growth cone. In terms of biological role, component of the exocyst complex involved in the docking of exocytic vesicles with fusion sites on the plasma membrane. The polypeptide is Exocyst complex component 8 (EXOC8) (Homo sapiens (Human)).